The chain runs to 199 residues: Recombination protein RecR (199 aa).

Residues 58–73 (CSVCTNLTDRDPCRIC) form a C4-type zinc finger. The Toprim domain maps to 81–176 (AVICVVEEPR…KVTRIAHGLP (96 aa)).

The protein belongs to the RecR family.

May play a role in DNA repair. It seems to be involved in an RecBC-independent recombinational process of DNA repair. It may act with RecF and RecO. The sequence is that of Recombination protein RecR from Heliobacterium modesticaldum (strain ATCC 51547 / Ice1).